Reading from the N-terminus, the 168-residue chain is ATP synthase F(1) complex subunit delta, mitochondrial (168 aa).

Residues Met-1 to Tyr-22 constitute a mitochondrion transit peptide. 2 positions are modified to N6-acetyllysine; alternate: Lys-136 and Lys-165. An N6-succinyllysine; alternate mark is found at Lys-136 and Lys-165.

This sequence belongs to the ATPase epsilon chain family. As to quaternary structure, component of the ATP synthase complex composed at least of ATP5F1A/subunit alpha, ATP5F1B/subunit beta, ATP5MC1/subunit c (homooctomer), MT-ATP6/subunit a, MT-ATP8/subunit 8, ATP5ME/subunit e, ATP5MF/subunit f, ATP5MG/subunit g, ATP5MK/subunit k, ATP5MJ/subunit j, ATP5F1C/subunit gamma, ATP5F1D/subunit delta, ATP5F1E/subunit epsilon, ATP5PF/subunit F6, ATP5PB/subunit b, ATP5PD/subunit d, ATP5PO/subunit OSCP. ATP synthase complex consists of a soluble F(1) head domain (subunits alpha(3) and beta(3)) - the catalytic core - and a membrane F(0) domain - the membrane proton channel (subunits c, a, 8, e, f, g, k and j). These two domains are linked by a central stalk (subunits gamma, delta, and epsilon) rotating inside the F1 region and a stationary peripheral stalk (subunits F6, b, d, and OSCP). Component of a complex composed at least by ATPIF1, ATP5F1A, ATP5F1B, ATP5F1C AND ATP5F1E.

The protein localises to the mitochondrion. Its subcellular location is the mitochondrion inner membrane. Its function is as follows. Subunit delta, of the mitochondrial membrane ATP synthase complex (F(1)F(0) ATP synthase or Complex V) that produces ATP from ADP in the presence of a proton gradient across the membrane which is generated by electron transport complexes of the respiratory chain. ATP synthase complex consist of a soluble F(1) head domain - the catalytic core - and a membrane F(1) domain - the membrane proton channel. These two domains are linked by a central stalk rotating inside the F(1) region and a stationary peripheral stalk. During catalysis, ATP synthesis in the catalytic domain of F(1) is coupled via a rotary mechanism of the central stalk subunits to proton translocation. In vivo, can only synthesize ATP although its ATP hydrolase activity can be activated artificially in vitro. With the central stalk subunit gamma, is essential for the biogenesis of F(1) catalytic part of the ATP synthase complex namely in the formation of F1 assembly intermediate. The chain is ATP synthase F(1) complex subunit delta, mitochondrial from Bos taurus (Bovine).